Here is a 389-residue protein sequence, read N- to C-terminus: Chalcone synthase 4 (389 aa).

Cys164 is a catalytic residue.

It belongs to the thiolase-like superfamily. Chalcone/stilbene synthases family.

The enzyme catalyses (E)-4-coumaroyl-CoA + 3 malonyl-CoA + 3 H(+) = 2',4,4',6'-tetrahydroxychalcone + 3 CO2 + 4 CoA. Its pathway is secondary metabolite biosynthesis; flavonoid biosynthesis. Its function is as follows. The primary product of this enzyme is 4,2',4',6'-tetrahydroxychalcone (also termed naringenin-chalcone or chalcone) which can under specific conditions spontaneously isomerize into naringenin. The chain is Chalcone synthase 4 (CHS4) from Pisum sativum (Garden pea).